Reading from the N-terminus, the 694-residue chain is Frizzled-2 (694 aa).

Positions 1–22 (MRHNRLKVLILGLVLLLTSCRA) are cleaved as a signal peptide. Over 23-315 (DGPLHSADHG…GPFFSNDEKD (293 aa)) the chain is Extracellular. Residues 59 to 180 (DPNLRCEEIT…GDPDNLCMEQ (122 aa)) enclose the FZ domain. 5 disulfides stabilise this stretch: Cys-64–Cys-125, Cys-72–Cys-118, Cys-109–Cys-147, Cys-136–Cys-177, and Cys-140–Cys-164. A glycan (N-linked (GlcNAc...) asparagine) is linked at Asn-78. The disordered stretch occupies residues 175–253 (NLCMEQPSYT…QGEKASGKEC (79 aa)). Positions 187 to 224 (GSGGSSGGSGGSGSGSGSGGKRKQGGSGSGGSGAGGSS) are enriched in gly residues. N-linked (GlcNAc...) asparagine glycosylation occurs at Asn-288. Residues 316–336 (FAGLWIALWSGLCFCSTLMTL) traverse the membrane as a helical segment. Residues 337 to 352 (TTFIIDTERFKYPERP) are Cytoplasmic-facing. The helical transmembrane segment at 353 to 373 (IVFLSACYFMVAVGYLSRNFL) threads the bilayer. Residues 374 to 397 (QNEEIACDGLLLRESSTGPHSCTL) lie on the Extracellular side of the membrane. Residues 398–418 (VFLLTYFFGMASSIWWVILSF) form a helical membrane-spanning segment. Residues 419–439 (TWFLAAGLKWGNEAITKHSQY) are Cytoplasmic-facing. A helical membrane pass occupies residues 440–460 (FHLAAWLIPTVQSVAVLLLSA). Residues 461-482 (VDGDPILGICYVGNLNPDHLKT) lie on the Extracellular side of the membrane. A helical transmembrane segment spans residues 483–503 (FVLAPLFVYLVIGTTFLMAGF). Residues 504–534 (VSLFRIRSVIKQQGGVGAGVKADKLEKLMIR) lie on the Cytoplasmic side of the membrane. Residues 535–555 (IGIFSVLYTVPATIVIGCYLY) traverse the membrane as a helical segment. Over 556–584 (EAAYFEDWIKALACPCAQVKGPGKKPLYS) the chain is Extracellular. Residues 585-605 (VLMLKYFMALAVGITSGVWIW) form a helical membrane-spanning segment. Over 606–694 (SGKTLESWRR…VLKQPAASHV (89 aa)) the chain is Cytoplasmic. Positions 608–613 (KTLESW) match the Lys-Thr-X-X-X-Trp motif, mediates interaction with the PDZ domain of Dvl family members motif. The short motif at 692 to 694 (SHV) is the PDZ-binding element.

The protein belongs to the G-protein coupled receptor Fz/Smo family. Interacts with ATP6AP2.

The protein localises to the cell membrane. Receptor for Wnt proteins. Most of frizzled receptors are coupled to the beta-catenin canonical signaling pathway, which leads to the activation of disheveled proteins, inhibition of GSK-3 kinase, nuclear accumulation of beta-catenin and activation of Wnt target genes. A second signaling pathway involving PKC and calcium fluxes has been seen for some family members, but it is not yet clear if it represents a distinct pathway or if it can be integrated in the canonical pathway, as PKC seems to be required for Wnt-mediated inactivation of GSK-3 kinase. Both pathways seem to involve interactions with G-proteins. Required to coordinate the cytoskeletons of epidermal cells to produce a parallel array of cuticular hairs and bristles. This Drosophila melanogaster (Fruit fly) protein is Frizzled-2 (fz2).